The primary structure comprises 362 residues: MSNQVPEKMQAVVCHGPHDYRLEEVAVPQRKPGEALIRVEAVGICASDLKCYHGAAKFWGDENRPAWAETMVIPGHEFVGRVVELDDEAAQRWGIAVGDRVVSEQIVPCWECLFCKRGQYHMCQPHDLYGFKRRTPGAMASYMVYPAEALVHKVSPDIPAQHAAFAEPLSCSLHAVERAQITFEDTVVVAGCGPIGLGMIAGAKAKSPMRVIALDMAPDKLKLAEKCGADLTINIAEQDAEKIIKDLTGGYGADVYIEGTGHTSAVPQGLNLLRKLGRYVEYGVFGSDVTVDWSIISDDKELDVLGAHLGPYCWPAAIKMIESGALPMDEICTHQFPLTEFQKGLDLVASGKESVKVSLIPA.

Zn(2+)-binding residues include Cys45, His76, Glu77, Cys109, Cys112, Cys115, and Cys123. NAD(+)-binding residues include Ile195 and Asp215.

It belongs to the zinc-containing alcohol dehydrogenase family. Zn(2+) serves as cofactor.

The enzyme catalyses erythritol + NAD(+) = D-erythrulose + NADH + H(+). It catalyses the reaction L-threitol + NAD(+) = L-erythrulose + NADH + H(+). It participates in carbohydrate metabolism; erythritol degradation. Its pathway is carbohydrate metabolism; L-threitol degradation. Its function is as follows. Catalyzes the NAD-dependent reversible oxidation of erythritol and L-threitol. Involved in the degradation pathways of erythritol and L-threitol, that allow M.smegmatis to grow on these compounds as the sole carbon source. In Mycolicibacterium smegmatis (strain ATCC 700084 / mc(2)155) (Mycobacterium smegmatis), this protein is Erythritol/L-threitol dehydrogenase.